A 96-amino-acid polypeptide reads, in one-letter code: MKNIVIIITVAVLFNLFGESLQMVPFETYPLNQDDSKYDCLTNGYNPYCQDICKLHNTKEGYCKKFFCICEKLSKENVKFLAEIIDTCNERLDEIL.

Residues 1–22 form the signal peptide; the sequence is MKNIVIIITVAVLFNLFGESLQ. Residues 26-89 form the LCN-type CS-alpha/beta domain; sequence FETYPLNQDD…FLAEIIDTCN (64 aa). Disulfide bonds link Cys-40-Cys-63, Cys-49-Cys-68, and Cys-53-Cys-70.

It belongs to the long (3 C-C) scorpion toxin superfamily. Expressed by the venom gland.

Its subcellular location is the secreted. This Lychas mucronatus (Chinese swimming scorpion) protein is Neurotoxin 23.